Here is a 199-residue protein sequence, read N- to C-terminus: Lipid A acyltransferase PagP (199 aa).

A signal peptide spans 1–25 (MNYKDIINACILSGVFLLHSPSALA). Active-site residues include H74, D117, and S118.

It belongs to the lipid A palmitoyltransferase family. In terms of assembly, homodimer.

Its subcellular location is the cell outer membrane. The catalysed reaction is a lipid A + a 1,2-diacyl-sn-glycero-3-phosphocholine = a hepta-acyl lipid A + a 2-acyl-sn-glycero-3-phosphocholine. It catalyses the reaction a lipid IVA + a 1,2-diacyl-sn-glycero-3-phosphocholine = a lipid IVB + a 2-acyl-sn-glycero-3-phosphocholine. The enzyme catalyses a lipid IIA + a 1,2-diacyl-sn-glycero-3-phosphocholine = a lipid IIB + a 2-acyl-sn-glycero-3-phosphocholine. Its function is as follows. Transfers a fatty acid residue from the sn-1 position of a phospholipid to the N-linked hydroxyfatty acid chain on the proximal unit of lipid A or its precursors. The chain is Lipid A acyltransferase PagP from Yersinia pestis bv. Antiqua (strain Antiqua).